The primary structure comprises 278 residues: Sulfur carrier protein FdhD (278 aa).

Cys113 functions as the Cysteine persulfide intermediate in the catalytic mechanism. Mo-bis(molybdopterin guanine dinucleotide) is bound at residue 251-256 (FCRNGR).

Belongs to the FdhD family.

It localises to the cytoplasm. Required for formate dehydrogenase (FDH) activity. Acts as a sulfur carrier protein that transfers sulfur from IscS to the molybdenum cofactor prior to its insertion into FDH. The protein is Sulfur carrier protein FdhD of Shewanella oneidensis (strain ATCC 700550 / JCM 31522 / CIP 106686 / LMG 19005 / NCIMB 14063 / MR-1).